The sequence spans 88 residues: Conotoxin VxVIB (88 aa).

A signal peptide spans 1–22 (MNLACVLIVAVLFLTASQLATA). Residues 23-52 (ASYARDKQEYPAVRSSDEMQDSEDLTLTKE) constitute a propeptide that is removed on maturation. 3 disulfides stabilise this stretch: Cys-53-Cys-68, Cys-60-Cys-72, and Cys-67-Cys-81.

In terms of tissue distribution, expressed by the venom duct.

Its subcellular location is the secreted. In terms of biological role, may act as a neurotoxin, but produces no obvious effect on ionic currents when tested on the mouse dorsal rooted ganglia (DRG). This is Conotoxin VxVIB from Conus vexillum (Flag cone).